A 95-amino-acid chain; its full sequence is Sec-independent protein translocase protein TatA (95 aa).

Residues methionine 1–glycine 21 form a helical membrane-spanning segment. Residues glycine 42–valine 95 are disordered.

Belongs to the TatA/E family. As to quaternary structure, the Tat system comprises two distinct complexes: a TatABC complex, containing multiple copies of TatA, TatB and TatC subunits, and a separate TatA complex, containing only TatA subunits. Substrates initially bind to the TatABC complex, which probably triggers association of the separate TatA complex to form the active translocon.

It is found in the cell inner membrane. Part of the twin-arginine translocation (Tat) system that transports large folded proteins containing a characteristic twin-arginine motif in their signal peptide across membranes. TatA could form the protein-conducting channel of the Tat system. This Methylorubrum extorquens (strain CM4 / NCIMB 13688) (Methylobacterium extorquens) protein is Sec-independent protein translocase protein TatA.